The chain runs to 397 residues: CCA-adding enzyme (397 aa).

ATP contacts are provided by G26 and R29. CTP-binding residues include G26 and R29. The Mg(2+) site is built by D39 and D41. Positions 110, 153, 156, 159, and 162 each coordinate ATP. The CTP site is built by R110, D153, R156, R159, and R162.

The protein belongs to the tRNA nucleotidyltransferase/poly(A) polymerase family. Bacterial CCA-adding enzyme type 3 subfamily. Homodimer. Mg(2+) is required as a cofactor.

It catalyses the reaction a tRNA precursor + 2 CTP + ATP = a tRNA with a 3' CCA end + 3 diphosphate. The catalysed reaction is a tRNA with a 3' CCA end + 2 CTP + ATP = a tRNA with a 3' CCACCA end + 3 diphosphate. Functionally, catalyzes the addition and repair of the essential 3'-terminal CCA sequence in tRNAs without using a nucleic acid template. Adds these three nucleotides in the order of C, C, and A to the tRNA nucleotide-73, using CTP and ATP as substrates and producing inorganic pyrophosphate. tRNA 3'-terminal CCA addition is required both for tRNA processing and repair. Also involved in tRNA surveillance by mediating tandem CCA addition to generate a CCACCA at the 3' terminus of unstable tRNAs. While stable tRNAs receive only 3'-terminal CCA, unstable tRNAs are marked with CCACCA and rapidly degraded. This Bacillus mycoides (strain KBAB4) (Bacillus weihenstephanensis) protein is CCA-adding enzyme.